The following is a 188-amino-acid chain: Cell division protein SepF (188 aa).

Belongs to the SepF family. As to quaternary structure, homodimer. Interacts with FtsZ.

It localises to the cytoplasm. Functionally, cell division protein that is part of the divisome complex and is recruited early to the Z-ring. Probably stimulates Z-ring formation, perhaps through the cross-linking of FtsZ protofilaments. Its function overlaps with FtsA. The chain is Cell division protein SepF from Synechococcus sp. (strain CC9605).